A 3291-amino-acid chain; its full sequence is MQEELSVALSCPGMKSLGTLLPLLVLLGTTVPGIRGQAGSLDLQIDEEQPAGTLIGDISAGLPPGTAPPPMYFISAQEGSGVGTDLDIDEHSGVVCTARVLDRERRDRYRFTAVTPDGATVEVTVRVADINDHAPAFPQARAALQIPEHTALGTRYPLEPAHDADAGRLGTQGYALSGDGAGETFRLETRPGPGGAPVPELVIAGELDRENRSHYMLQLEAYDGGSPPRRAQALLDVTLLDINDHAPAFNQSRYHAVVSESLAPGSPVLQVFASDADAGANGAVTYEINRRQSEGDGPFSIDAHTGFLKLERPLDFEQRRVHELVVQARDGGAHPELGSAFVTVHVRDANDNQPSMTVIFLSADGSPRVSEAAPPGQLVARISVSDPDDGDFAHVNVSLEGGEGHFALSTQDSVIYLVCVARRLDREERDVYNLRVTATDSGSPPLRAEAAFVLHVTDVNDNAPAFDRQLYRPEPLPEVALPGSFVVRVTARDPDQGTNGQVTYSLAPGTHTHWFSIDPTSGIITTAATLDYELEPQPQLIVVATDGGLPPLVSSATVSVALQDVNDNEPQFQRTFYNASLPEGTQPGTCFLQVTATDADSGPFGLLSYSLGAGLGASGSPPFRIDAHSGEVCTTRILDRDQGPSSFDFTVTAIDGGGLKSMVYVKVFVADENDNPPQFYPREYAASLSAQSTPGTAVLRVHAHDPDQGPHGRLSYHILAGNSPPLFALDAHSGLLTVAWPLGRRANSVVQLEIGAQDGGGLQAEPIARVNISIVPGTPTPPIFEQLQYVFSVPEDVAPGTSVGVVQAHNPPGRLGPVTLTLSGGDPRGLFSLDSASGLLKTLRPLDRELLGPVLELEVRAGSGTPPVFSAARIRVLLDDVNDNSPAFPAPEDTVLLPQNTAPGTPVYTLRALDPDSGANSRVTFSLLAGGDGLFTVDPTTGHVRLMGPLGPPGGPPHELEVEAQDGGSPPRTSHFRLRVVIQDLGIHGLAPRFDSPTYRVDLPSGTTTGTQILQVQAQAPDGSPVTYHLAADGASNPFGLESQSGWLWVRAALDRESQELYTLKVMAVSGSKAELGQQTGTATVRVVILNQNDHSPRLSEEPTFLAVAENQPPGTSVGRVFATDKDSGPNGRLTYSLQQLSEDSKAFRIHPQTGEVTTLQTLDREQQSSFQLLVQVQDAGSPPRSATGTVHVAVLDLNDNSPTFLQASGAAGGGLPIQVPDRVPPGTLVTTLQAKDPDEGENGTILYTLTGSGSELFSLHPHTGELHTAASLIRAERPHYVLTLSAHDQGSPPRSASLQLLVQVLPSTRMVESPDLVEADSAATVPVVLTVTAAEGLRPGSLLGSVAPQEPASMGVLTYTLVGGADPEGTFALDSASGRLYLARVLDFESGPAWRALTVRAEGPGGAGARLMRVQVRVQDENEHAPAFARDPLALALPENPEPGATLYTFRASDADGPGPNSDVRYRLLRQEPPVPALRLDARTGALSAPRGLDRETTPALLLIVEATDRPANASRRKATRVSARVFVTDENDNAPVFASPSRMRLPEDQPPGPAALHVVARDPDLGEAARVSYRLAAGGDGHFRLHATTGALSVVRPLDREQRAEHVLTVVASDHGSPPRSSTQLLTVSVVDVNDEAPAFPQQEYNVILRENSPPGTSLLTLKATDPDLGANGQVTYGGVSGESFSLDPNSGVLTTLRALDREEQEEINLTVYARDRGLPPLLTHITVRVTVEDENDHSPTFGNTHLSLEVPEGQDPQTLTTLRASDPDGGLNGQLQYRILGGDPSGAFALDLTSGEFGTTRPLDREVEPAFQLQIEARDGGQPALSATLLVTVTVLDANDHAPAFPVPSYSVEVPEDAPVGTLLLQLQAHDPDEGDNGRVMYYLGAGTAGAFLLEPTSGELSTATALDREHCASYAFSVTAVDGAAAGPLSTTVPITVTVRDVNDHAPAFPTSPLRLRLPRPGPSLNKPTLALATLRAEDRDAGANASILYRLAGTPPPGTTVDSYTGEIRVARSPAALGPRDRVLFIVATDLGRPARSATGVVIVGIQGEPERGPRFPRANNEAVLRENAPPGTPVISPKAVHSGGSNGPITYSILSGNERGIFSIQPSTGTITVQSAEGLDFETNPRLRLVLQAESGGAFAFSVLTLTLQDANDNAPRFLQPHYVAFLPESRPLEGPLLQVEADDLDQGSGGQISYSLAASQPARGLFHVDPATGTITTTAILDREIWAETRLVLMATDRGSPALVGSATLTVMVIDTNDNRPTIPQPWELRVSEDALLGSEIAQVTGNDVDSGPVLWYVLSPSGPQDPFSIGRYGGRVSLTGPLDFEQCDHYHLQLLAHDGPHEGHANLTVLVEDVNDNVPIFSQSLYQVMMLEHTPPGSAILSVSATDRDSGANGHISYHLASPAEGFSVDTNNGTLFTTVGAMALGHEGPGVVDVVLEARDHGAPGRSAQATVHVQLKDQNDHAPSFTLPHYRVAVSEDLPPGSTLLTLEAIDADGSRSHATVDYSIISGNRGRVFQLEPRLAEVGDGVGPGPQALGCLVLLEPLDFESLTQYNLTVTAADRGQPPRSSAVPVTVTVLDVNDNPPVFTRASYRVTVPEDMPVGAELLHVEASDADPGPHGLVHFTLSSGDPLGLFELDENSGALRLAHPLDCETQAQHQLVVQAADPAGTHFALVPVTVEVQDVNDHGPAFPLSLLSTSLAENQPPGTLVTTLHAMDGDAGTFGRLRYTLLEAVPGPEGREAFSLNSSTGELRARVPFDYEHTGSFRLLVGAADAGNLSASVTVSVLITGEDEYDPVFLAPSFHFQVPEGAQRGHSLGHVQATDEDGGADGLVLYSLATSSPYFGINQTTGALYLRVDSRAPGSGTATSGGGGRTRREAPRELRLEVVARGPLPGSRSATVPVTVDITHTALGLAPDLNLLLVGAVAASLGVVVVLALAALVLGLVRARSRKAEAAPGPMSQTAPIASSSLQKLGREPPSPPPSEHLYHQTLPSYGGPGAGGPYPRGGSLDPSHSSGRGSAEAAEDDEIRMINEFPRVASVASSLAARGPDSGIQQDADGLSDTSCEPPAPDTWYKGRKAGLLLPGAGATLYREEGPPATATAFLGGCGLSPAPTGDYGFPADGKPCVAGALTAIVAGEEELRGSYNWDYLLSWCPQFQPLASVFTEIARLKDEARPCPPAPRIDPPPLITAVAHPGAKSVPPKPASTAATRAIFPPASHRSPISHEGSLSSAAMSPSFSPSLSPLAARSPVVSPFGVAQGPSASALSTESGLEPPDDTELRI.

An N-terminal signal peptide occupies residues 1-35 (MQEELSVALSCPGMKSLGTLLPLLVLLGTTVPGIR). Over 36–2933 (GQAGSLDLQI…PDLNLLLVGA (2898 aa)) the chain is Extracellular. 27 consecutive Cadherin domains span residues 37-137 (QAGS…APAF), 138-249 (PQAR…APAF), 250-356 (NQSR…QPSM), 369-466 (VSEA…APAF), 476-572 (LPEV…EPQF), 573-679 (QRTF…PPQF), 680-784 (YPRE…PPIF), 785-888 (EQLQ…SPAF), 889-994 (PAPE…APRF), 995-1105 (DSPT…EPTF), 1100-1205 (SEEP…SPTF), 1218-1317 (IQVP…SPDL), 1326-1429 (VPVV…APAF), 1430-1539 (ARDP…APVF), 1539-1642 (FASP…APAF), 1643-1744 (PQQE…SPTF), 1745-1848 (GNTH…APAF), 1849-1953 (PVPS…APAF), 1976-2061 (LATL…GPRF), 2062-2164 (PRAN…APRF), 2165-2270 (LQPH…RPTI), 2270-2369 (IPQP…VPIF), 2370-2475 (SQSL…APSF), 2476-2595 (TLPH…PPVF), 2596-2699 (TRAS…GPAF), 2700-2806 (PLSL…DPVF), and 2807-2926 (LAPS…APDL). N-linked (GlcNAc...) asparagine glycosylation is present at Asn396. The disordered stretch occupies residues 951–971 (GPPGGPPHELEVEAQDGGSPP). Asn1711 carries an N-linked (GlcNAc...) asparagine glycan. The N-linked (GlcNAc...) asparagine glycan is linked to Asn2354. Asn2562 is a glycosylation site (N-linked (GlcNAc...) asparagine). Residues 2934–2954 (VAASLGVVVVLALAALVLGLV) form a helical membrane-spanning segment. Residues 2955–3291 (RARSRKAEAA…EPPDDTELRI (337 aa)) lie on the Cytoplasmic side of the membrane. The disordered stretch occupies residues 2978–3033 (SLQKLGREPPSPPPSEHLYHQTLPSYGGPGAGGPYPRGGSLDPSHSSGRGSAEAAE). Over residues 3004–3013 (GGPGAGGPYP) the composition is skewed to gly residues. Ser3048 carries the phosphoserine modification. Disordered stretches follow at residues 3051 to 3080 (SSLA…PAPD) and 3226 to 3291 (ASHR…ELRI). Over residues 3237 to 3259 (SLSSAAMSPSFSPSLSPLAARSP) the composition is skewed to low complexity. Positions 3270 to 3279 (PSASALSTES) are enriched in polar residues.

Heterophilic interaction with FAT4; this interaction affects their respective protein levels.

The protein resides in the cell membrane. Functionally, calcium-dependent cell-adhesion protein. Mediates functions in neuroprogenitor cell proliferation and differentiation. This is Protocadherin-16 (Dchs1) from Rattus norvegicus (Rat).